The following is a 320-amino-acid chain: Transcription factor NAI1 (320 aa).

Residues 53 to 105 are disordered; the sequence is TKQMKTNNNMNSTSSSPSSSSSSGSRTSQVISFGSPDTKTNPVETSLNFSNQV. Residues 58 to 80 are compositionally biased toward low complexity; sequence TNNNMNSTSSSPSSSSSSGSRTS. The span at 81-105 shows a compositional bias: polar residues; the sequence is QVISFGSPDTKTNPVETSLNFSNQV. Residues 128–177 form the bHLH domain; sequence HLLKEHVLAERKRRQKLNERLIALSALLPGLKKTDKATVLEDAIKHLKQL.

Homodimer. In terms of tissue distribution, expressed constitutively in roots, leaves, stems, and flowers.

The protein resides in the nucleus. In terms of biological role, transcription activator that regulates the expression of at least NAI2, PYK10 and PBP1. Required for and mediates the formation of endoplasmic reticulum bodies (ER bodies). Involved in the symbiotic interactions with the endophytes of the Sebacinaceae fungus family, such as Piriformospora indica and Sebacina. In Arabidopsis thaliana (Mouse-ear cress), this protein is Transcription factor NAI1 (NAI1).